A 304-amino-acid chain; its full sequence is Probable 5-dehydro-4-deoxyglucarate dehydratase (304 aa).

Belongs to the DapA family.

The catalysed reaction is 5-dehydro-4-deoxy-D-glucarate + H(+) = 2,5-dioxopentanoate + CO2 + H2O. It functions in the pathway carbohydrate acid metabolism; D-glucarate degradation; 2,5-dioxopentanoate from D-glucarate: step 2/2. This chain is Probable 5-dehydro-4-deoxyglucarate dehydratase, found in Pseudarthrobacter chlorophenolicus (strain ATCC 700700 / DSM 12829 / CIP 107037 / JCM 12360 / KCTC 9906 / NCIMB 13794 / A6) (Arthrobacter chlorophenolicus).